Reading from the N-terminus, the 453-residue chain is UDP-N-acetylmuramoylalanine--D-glutamate ligase (453 aa).

An ATP-binding site is contributed by 120-126; that stretch reads GSNGKST.

It belongs to the MurCDEF family.

It is found in the cytoplasm. It carries out the reaction UDP-N-acetyl-alpha-D-muramoyl-L-alanine + D-glutamate + ATP = UDP-N-acetyl-alpha-D-muramoyl-L-alanyl-D-glutamate + ADP + phosphate + H(+). It functions in the pathway cell wall biogenesis; peptidoglycan biosynthesis. In terms of biological role, cell wall formation. Catalyzes the addition of glutamate to the nucleotide precursor UDP-N-acetylmuramoyl-L-alanine (UMA). The sequence is that of UDP-N-acetylmuramoylalanine--D-glutamate ligase from Teredinibacter turnerae (strain ATCC 39867 / T7901).